Consider the following 414-residue polypeptide: Ferredoxin--NAD(P)(+) reductase fdr (414 aa).

7-38 provides a ligand contact to FAD; it reads DVVIVGAGHGGAQTAIALRQNGFAGTIAIIGA. Residue 149 to 177 participates in NAD(+) binding; the sequence is KVVIIGGGYIGLEAAAVMAKFGKNVTLIE.

The protein belongs to the FAD-dependent oxidoreductase family. In terms of assembly, monomer. Carbazole 1,9a-dioxygenase complex consists of a terminal oxygenase component CarAa, a ferredoxin reductase component fdr and a ferredoxin component CarAc. The cofactor is FAD.

The catalysed reaction is 2 reduced [2Fe-2S]-[ferredoxin] + NAD(+) + H(+) = 2 oxidized [2Fe-2S]-[ferredoxin] + NADH. It catalyses the reaction 2 reduced [2Fe-2S]-[ferredoxin] + NADP(+) + H(+) = 2 oxidized [2Fe-2S]-[ferredoxin] + NADPH. In terms of biological role, part of the multicomponent carbazole 1,9a-dioxygenase (CARDO), that converts carbazole (CAR) into 2-aminobiphenyl-2,3-diol. The polypeptide is Ferredoxin--NAD(P)(+) reductase fdr (fdr) (Sphingomonas sp).